Reading from the N-terminus, the 292-residue chain is Thyroxine 5-deiodinase (292 aa).

Over 1–30 the chain is Cytoplasmic; it reads VVGEGRGALGGAATMLRSLLLHSLRLCAQT. The helical; Signal-anchor for type II membrane protein transmembrane segment at 31 to 50 threads the bilayer; that stretch reads ASCLVLFPRFLGTAFMLWLL. At 51–292 the chain is on the extracellular side; sequence DFLCIRKHLL…QLHGPQPRRV (242 aa). Residue Sec-158 is part of the active site. Residue Sec-158 is a non-standard amino acid, selenocysteine.

It belongs to the iodothyronine deiodinase family. In terms of assembly, monomer. Homodimer. May undergo minor heretodimerization with DIO1 and DIO2.

The protein localises to the cell membrane. Its subcellular location is the endosome membrane. It catalyses the reaction 3,3',5'-triiodo-L-thyronine + iodide + A + H(+) = L-thyroxine + AH2. The catalysed reaction is 3,3'-diiodo-L-thyronine + iodide + A + H(+) = 3,3',5-triiodo-L-thyronine + AH2. The enzyme catalyses 3-iodo-L-thyronine + iodide + A + H(+) = 3,5-diiodo-L-thyronine + AH2. It carries out the reaction L-thyronine + iodide + A + H(+) = 3-iodo-L-thyronine + AH2. It catalyses the reaction 3',5'-diiodo-L-thyronine + iodide + A + H(+) = 3,3',5'-triiodo-L-thyronine + AH2. The catalysed reaction is 3'-iodo-L-thyronine + iodide + A + H(+) = 3,3'-diiodo-L-thyronine + AH2. The enzyme catalyses 3,3',5'-triiodothyronamine + iodide + A + H(+) = 3,3',5,5'-tetraiodothyronamine + AH2. It carries out the reaction 3',5'-diiodothyronamine + iodide + A + H(+) = 3,3',5'-triiodothyronamine + AH2. It catalyses the reaction 3,3'-diiodothyronamine + iodide + A + H(+) = 3,3',5-triiodothyronamine + AH2. The catalysed reaction is 3-iodothyronamine + iodide + A + H(+) = 3,5-diiodothyronamine + AH2. The enzyme catalyses 3'-iodothyronamine + iodide + A + H(+) = 3,3'-diiodothyronamine + AH2. It carries out the reaction thyronamine + iodide + A + H(+) = 3-iodothyronamine + AH2. Plays a crucial role in the metabolism of thyroid hormones (TH) and has specific roles in TH activation and inactivation by deiodination.Catalyzes the deiodination of L-thyroxine (T4) to 3,3',5'-triiodothyronine (rT3), 3,5,3'-triiodothyronine (T3) to 3,3'-diiodothyronine (3,3'-T2), 3,5-diiodothyronine (3,5-T2) to 3-monoiodothyronine (3-T1), rT3 to 3',5'-diiodothyronine (3',5'-T2) and 3,3'-T2 to 3'-monoiodothyronine (3'-T1) via inner-ring deiodination (IRD). Catalyzes the deiodination of 3-T1 to L-thyronine (T0) via outer-ring deiodination (ORD). Catalyzes the tyrosyl ring deiodinations of 3,3',5,5'-tetraiodothyronamine, 3,3',5'-triiodothyronamine, 3,5,3'-triiodothyronamine, 3,5-diiodothyronamine, 3,3'-diiodothyronamine and 3-iodothyronamine. This chain is Thyroxine 5-deiodinase (DIO3), found in Ovis aries (Sheep).